The primary structure comprises 223 residues: Expansin-B6 (223 aa).

The region spanning 16–124 (GGACGFAVAN…RRVECLYRRT (109 aa)) is the Expansin-like EG45 domain. 3 disulfide bridges follow: Cys19-Cys46, Cys49-Cys119, and Cys54-Cys60. Positions 137–218 (YYISFVVEYE…NWKPNETYRS (82 aa)) constitute an Expansin-like CBD domain. Asn213 carries N-linked (GlcNAc...) asparagine glycosylation.

It belongs to the expansin family. Expansin B subfamily.

The protein resides in the secreted. The protein localises to the cell wall. It is found in the membrane. Functionally, may cause loosening and extension of plant cell walls by disrupting non-covalent bonding between cellulose microfibrils and matrix glucans. The protein is Expansin-B6 of Arabidopsis thaliana (Mouse-ear cress).